A 642-amino-acid chain; its full sequence is Glutamyl-tRNA(Gln) amidotransferase subunit E (642 aa).

The protein belongs to the GatB/GatE family. GatE subfamily. In terms of assembly, heterodimer of GatD and GatE.

The catalysed reaction is L-glutamyl-tRNA(Gln) + L-glutamine + ATP + H2O = L-glutaminyl-tRNA(Gln) + L-glutamate + ADP + phosphate + H(+). In terms of biological role, allows the formation of correctly charged Gln-tRNA(Gln) through the transamidation of misacylated Glu-tRNA(Gln) in organisms which lack glutaminyl-tRNA synthetase. The reaction takes place in the presence of glutamine and ATP through an activated gamma-phospho-Glu-tRNA(Gln). The GatDE system is specific for glutamate and does not act on aspartate. The sequence is that of Glutamyl-tRNA(Gln) amidotransferase subunit E from Aeropyrum pernix (strain ATCC 700893 / DSM 11879 / JCM 9820 / NBRC 100138 / K1).